Reading from the N-terminus, the 152-residue chain is Probable prefoldin subunit 5 (152 aa).

The protein belongs to the prefoldin subunit alpha family. Heterohexamer of two PFD-alpha type and four PFD-beta type subunits.

Functionally, binds specifically to cytosolic chaperonin (c-CPN) and transfers target proteins to it. Binds to nascent polypeptide chain and promotes folding in an environment in which there are many competing pathways for nonnative proteins. The protein is Probable prefoldin subunit 5 (pfd-5) of Caenorhabditis elegans.